A 151-amino-acid polypeptide reads, in one-letter code: Transcriptional regulator MraZ (151 aa).

2 consecutive SpoVT-AbrB domains span residues 5 to 52 and 81 to 124; these read ANAI…PLSE and AVDL…DEDA.

The protein belongs to the MraZ family. As to quaternary structure, forms oligomers.

It localises to the cytoplasm. It is found in the nucleoid. The chain is Transcriptional regulator MraZ from Pseudomonas savastanoi pv. phaseolicola (strain 1448A / Race 6) (Pseudomonas syringae pv. phaseolicola (strain 1448A / Race 6)).